The following is a 450-amino-acid chain: Probable cysteine desulfurase, mitochondrial (450 aa).

Residues 1–52 (MNRSILKFVKNGIISSSSRINNNGFINKNNNNRWFATLPQPNRGIAGEKQPI) constitute a mitochondrion transit peptide. Pyridoxal 5'-phosphate is bound by residues 120–121 (AT), N200, Q228, and 248–250 (SGH). K251 is modified (N6-(pyridoxal phosphate)lysine). T288 lines the pyridoxal 5'-phosphate pocket. The Cysteine persulfide intermediate role is filled by C374. [2Fe-2S] cluster is bound at residue C374.

The protein belongs to the class-V pyridoxal-phosphate-dependent aminotransferase family. NifS/IscS subfamily. Pyridoxal 5'-phosphate serves as cofactor.

Its subcellular location is the mitochondrion. The protein localises to the nucleus. It carries out the reaction (sulfur carrier)-H + L-cysteine = (sulfur carrier)-SH + L-alanine. In terms of biological role, catalyzes the removal of elemental sulfur from cysteine to produce alanine. It supplies the inorganic sulfur for iron-sulfur (Fe-S) clusters. The chain is Probable cysteine desulfurase, mitochondrial (nfs1) from Dictyostelium discoideum (Social amoeba).